The following is a 232-amino-acid chain: Orotidine 5'-phosphate decarboxylase (232 aa).

Substrate contacts are provided by residues Asp-13, Lys-35, 62-71 (DLKFHDIPNT), Thr-122, Arg-182, Gln-191, Gly-211, and Arg-212. Lys-64 serves as the catalytic Proton donor.

The protein belongs to the OMP decarboxylase family. Type 1 subfamily. As to quaternary structure, homodimer.

It carries out the reaction orotidine 5'-phosphate + H(+) = UMP + CO2. It functions in the pathway pyrimidine metabolism; UMP biosynthesis via de novo pathway; UMP from orotate: step 2/2. Catalyzes the decarboxylation of orotidine 5'-monophosphate (OMP) to uridine 5'-monophosphate (UMP). This chain is Orotidine 5'-phosphate decarboxylase, found in Pseudomonas savastanoi pv. phaseolicola (strain 1448A / Race 6) (Pseudomonas syringae pv. phaseolicola (strain 1448A / Race 6)).